We begin with the raw amino-acid sequence, 170 residues long: MNLKDYIATIENYPKEGITFRDISPLMADGNAYSYAVREIVQYATDKKVDMIVGPEARGFIVGCPVAFELGIGFAPVRKPGKLPREVISADYEKEYGVDTLTMHADAIKPGQRVLIVDDLLATGGTVKATIEMIEKLGGVMAGCAFLVELDELNGREKIGDYDYKVLMHY.

It belongs to the purine/pyrimidine phosphoribosyltransferase family. Homodimer.

Its subcellular location is the cytoplasm. The enzyme catalyses AMP + diphosphate = 5-phospho-alpha-D-ribose 1-diphosphate + adenine. It functions in the pathway purine metabolism; AMP biosynthesis via salvage pathway; AMP from adenine: step 1/1. Catalyzes a salvage reaction resulting in the formation of AMP, that is energically less costly than de novo synthesis. This is Adenine phosphoribosyltransferase from Streptococcus pneumoniae (strain Hungary19A-6).